Reading from the N-terminus, the 528-residue chain is Keratin, type II cytoskeletal 78 (528 aa).

The interval 1-104 (MSLSPCRARR…DPQFQVVRTQ (104 aa)) is head. The interval 23 to 45 (VGRGRTGFSSRSLSSFGGCRGGS) is disordered. Over residues 24–39 (GRGRTGFSSRSLSSFG) the composition is skewed to low complexity. A coil 1A region spans residues 105–140 (ETQQIRVLNNQFASFIDKVRFLEQQNKVLETKWHLL). In terms of domain architecture, IF rod spans 105–418 (ETQQIRVLNN…RLLEGEECRM (314 aa)). A linker 1 region spans residues 141–159 (QQQGLSDRPQGLESFFEAY). Positions 160 to 252 (LVRLRTQLEE…LYEEELGQLQ (93 aa)) are coil 1B. The interval 253 to 275 (TQASDMSVVLSMDNNRCLDFRDL) is linker 12. The segment at 276-415 (IAEVRARYEE…TYRRLLEGEE (140 aa)) is coil 2. The tail stretch occupies residues 416-528 (CRMSGECASQ…ESSLKTSVTY (113 aa)).

Belongs to the intermediate filament family. As to quaternary structure, heterotetramer of two type I and two type II keratins.

This is Keratin, type II cytoskeletal 78 (KRT78) from Bos taurus (Bovine).